Reading from the N-terminus, the 564-residue chain is Phosphoinositide phospholipase C 3 (564 aa).

Residues 19 to 54 (TRQPPVSIKRLFEAYSRNGKMSFDELLRFVSEVQGE) form the EF-hand domain. In terms of domain architecture, PI-PLC X-box spans 106 to 250 (HDMKAPLSHY…LKGKILISTK (145 aa)). Active-site residues include His121 and His167. The region spanning 296-412 (RDLIAIHAAN…GYVKKPRILL (117 aa)) is the PI-PLC Y-box domain. The 134-residue stretch at 406 to 539 (KKPRILLDEH…KSGVRAVRLH (134 aa)) folds into the C2 domain. Residues Asp450, Asp456, Asp509, Asp511, and Asp517 each contribute to the Ca(2+) site.

It depends on Ca(2+) as a cofactor. Expressed in leaves, roots and siliques, but not in flowers.

It localises to the cell membrane. It carries out the reaction a 1,2-diacyl-sn-glycero-3-phospho-(1D-myo-inositol-4,5-bisphosphate) + H2O = 1D-myo-inositol 1,4,5-trisphosphate + a 1,2-diacyl-sn-glycerol + H(+). Functionally, the production of the second messenger molecules diacylglycerol (DAG) and inositol 1,4,5-trisphosphate (IP3) is mediated by activated phosphatidylinositol-specific phospholipase C enzymes. This chain is Phosphoinositide phospholipase C 3 (PLC3), found in Arabidopsis thaliana (Mouse-ear cress).